Here is a 598-residue protein sequence, read N- to C-terminus: UvrABC system protein C (598 aa).

A GIY-YIG domain is found at 14-91 (DQPGCYLMKD…IHKNNPKYNI (78 aa)). The 36-residue stretch at 196–231 (TEIQDRLQEKMAYAAAHMEFEKAAEFRDQIKAIETV) folds into the UVR domain.

Belongs to the UvrC family. As to quaternary structure, interacts with UvrB in an incision complex.

It is found in the cytoplasm. The UvrABC repair system catalyzes the recognition and processing of DNA lesions. UvrC both incises the 5' and 3' sides of the lesion. The N-terminal half is responsible for the 3' incision and the C-terminal half is responsible for the 5' incision. The sequence is that of UvrABC system protein C from Enterococcus faecalis (strain ATCC 700802 / V583).